We begin with the raw amino-acid sequence, 263 residues long: Protein TILLER ANGLE CONTROL 1 (263 aa).

The short motif at 55 to 61 (GILAIGT) is the IGT motif element. A disordered region spans residues 243–263 (GKKIHPEQLNGRSNAEGPLTA).

The protein belongs to the TAC family. As to expression, highly expressed in leaf sheath pulvinus. Expressed in shoot apical meristem and leaves.

In terms of biological role, involved in the regulation of leaf growth angle. Promotes horizontal shoot growth. In Zea mays (Maize), this protein is Protein TILLER ANGLE CONTROL 1.